A 297-amino-acid chain; its full sequence is Virulence genes transcriptional activator SpvR (297 aa).

In terms of domain architecture, HTH lysR-type spans 1 to 61; that stretch reads MDFLINKKLK…IRKNGTLIPT (61 aa). Positions 21 to 40 form a DNA-binding region, H-T-H motif; it reads FSIATSVLYITRTPLSRVIS.

This sequence belongs to the LysR transcriptional regulatory family.

Its subcellular location is the cytoplasm. In terms of biological role, positive regulator for the plasmid-encoded virulence factors SpvA, SpvB, and SpvC. In Salmonella dublin, this protein is Virulence genes transcriptional activator SpvR (spvR).